The sequence spans 360 residues: MFVARSIAADHKDLIHDVSFDFHGRRMATCSSDQSVKVWDKSENVNWHCTASWKTHSGSVWRVTWAHPEFGQVLASCSFDRTAAVWEEIVGESNDKLRGQSHWVKRTTLVDSRTSVTDVKFAPKHMGLMLATCSADGVVRIYEAPDVMNLSQWSLQHEISCKLSCSCISWNPSSSRAHSPMIAVGSDDSSPNIMGKVQIYEYNENTRKYAKAETLMSVSDPVHDIAFAPNLGRSFHILAVATKDVRIFTMKPLRKELSSSGGVTKFENHTVAQFDNHNSQVWRVSWNITGTVLASSGDDGTVRLWKANYMDNWKCIGVLKGDGNPVGNSFQGIFGSSIGSASHGLQNSVNGTSTSGRKHS.

WD repeat units lie at residues 10 to 49, 55 to 96, 111 to 152, 160 to 210, 217 to 258, and 276 to 315; these read DHKD…NWHC, THSG…SNDK, DSRT…NLSQ, SCKL…RKYA, SVSD…KELS, and NHNS…NWKC.

This sequence belongs to the WD repeat SEC13 family. As to quaternary structure, component of the Nup107-160 subcomplex of the nuclear pore complex (NPC). The Nup107-160 subcomplex includes NUP160, NUP133, NUP107, NUP98, NUP85, NUP43, NUP37, SEH1 and SEC13. Component of the GATOR2 subcomplex, composed of MIOS, SEC13, SEH1L, WDR24 and WDR59. The GATOR2 complex interacts with CASTOR1 and CASTOR2; the interaction is negatively regulated by arginine. The GATOR2 complex interacts with SESN1, SESN2 and SESN3; the interaction is negatively regulated by amino acids.

Its subcellular location is the chromosome. The protein resides in the centromere. It localises to the kinetochore. It is found in the nucleus. The protein localises to the nuclear pore complex. Its subcellular location is the lysosome membrane. Its activity is regulated as follows. The GATOR2 complex is negatively regulated by the upstream amino acid sensors CASTOR1 and SESN2, which sequester the GATOR2 complex in absence of amino acids. In the presence of abundant amino acids, GATOR2 is released from CASTOR1 and SESN2 and activated. In terms of biological role, component of the Nup107-160 subcomplex of the nuclear pore complex (NPC). The Nup107-160 subcomplex is required for the assembly of a functional NPC. The Nup107-160 subcomplex is also required for normal kinetochore microtubule attachment, mitotic progression and chromosome segregation. This subunit plays a role in recruitment of the Nup107-160 subcomplex to the kinetochore. Functionally, as a component of the GATOR2 complex, functions as an activator of the amino acid-sensing branch of the mTORC1 signaling pathway. The GATOR2 complex indirectly activates mTORC1 through the inhibition of the GATOR1 subcomplex. GATOR2 probably acts as an E3 ubiquitin-protein ligase toward GATOR1. In the presence of abundant amino acids, the GATOR2 complex mediates ubiquitination of the NPRL2 core component of the GATOR1 complex, leading to GATOR1 inactivation. In the absence of amino acids, GATOR2 is inhibited, activating the GATOR1 complex. This is Nucleoporin SEH1-B (seh1l-b) from Xenopus laevis (African clawed frog).